Here is a 264-residue protein sequence, read N- to C-terminus: 3-methyl-2-oxobutanoate hydroxymethyltransferase (264 aa).

Mg(2+)-binding residues include Asp45 and Asp84. Residues 45-46, Asp84, and Lys113 each bind 3-methyl-2-oxobutanoate; that span reads DS. Glu115 is a binding site for Mg(2+). Glu182 functions as the Proton acceptor in the catalytic mechanism.

The protein belongs to the PanB family. As to quaternary structure, homodecamer; pentamer of dimers. Mg(2+) serves as cofactor.

It is found in the cytoplasm. It carries out the reaction 3-methyl-2-oxobutanoate + (6R)-5,10-methylene-5,6,7,8-tetrahydrofolate + H2O = 2-dehydropantoate + (6S)-5,6,7,8-tetrahydrofolate. It functions in the pathway cofactor biosynthesis; (R)-pantothenate biosynthesis; (R)-pantoate from 3-methyl-2-oxobutanoate: step 1/2. In terms of biological role, catalyzes the reversible reaction in which hydroxymethyl group from 5,10-methylenetetrahydrofolate is transferred onto alpha-ketoisovalerate to form ketopantoate. This Caldicellulosiruptor saccharolyticus (strain ATCC 43494 / DSM 8903 / Tp8T 6331) protein is 3-methyl-2-oxobutanoate hydroxymethyltransferase.